The sequence spans 568 residues: Dihydroxy-acid dehydratase (568 aa).

Cysteine 59 provides a ligand contact to [2Fe-2S] cluster. Aspartate 91 contacts Mg(2+). Cysteine 132 contacts [2Fe-2S] cluster. Aspartate 133 and lysine 134 together coordinate Mg(2+). N6-carboxylysine is present on lysine 134. Cysteine 204 lines the [2Fe-2S] cluster pocket. Mg(2+) is bound at residue glutamate 456. Serine 482 acts as the Proton acceptor in catalysis.

It belongs to the IlvD/Edd family. In terms of assembly, homodimer. [2Fe-2S] cluster is required as a cofactor. The cofactor is Mg(2+).

It carries out the reaction (2R)-2,3-dihydroxy-3-methylbutanoate = 3-methyl-2-oxobutanoate + H2O. The catalysed reaction is (2R,3R)-2,3-dihydroxy-3-methylpentanoate = (S)-3-methyl-2-oxopentanoate + H2O. Its pathway is amino-acid biosynthesis; L-isoleucine biosynthesis; L-isoleucine from 2-oxobutanoate: step 3/4. The protein operates within amino-acid biosynthesis; L-valine biosynthesis; L-valine from pyruvate: step 3/4. Functions in the biosynthesis of branched-chain amino acids. Catalyzes the dehydration of (2R,3R)-2,3-dihydroxy-3-methylpentanoate (2,3-dihydroxy-3-methylvalerate) into 2-oxo-3-methylpentanoate (2-oxo-3-methylvalerate) and of (2R)-2,3-dihydroxy-3-methylbutanoate (2,3-dihydroxyisovalerate) into 2-oxo-3-methylbutanoate (2-oxoisovalerate), the penultimate precursor to L-isoleucine and L-valine, respectively. The protein is Dihydroxy-acid dehydratase of Verminephrobacter eiseniae (strain EF01-2).